The sequence spans 124 residues: uncharacterized protein (124 aa).

This is an uncharacterized protein from Schizosaccharomyces pombe (strain 972 / ATCC 24843) (Fission yeast).